Here is a 73-residue protein sequence, read N- to C-terminus: MGSFSIWHWLIVLVIVMLVFGTKKLRNIGQDLGGAVKGFKDGMKEGDDKAAPAKELRDSTTIDVDAKEKTRQQ.

A helical membrane pass occupies residues 1-21; that stretch reads MGSFSIWHWLIVLVIVMLVFG. The tract at residues 43–73 is disordered; that stretch reads MKEGDDKAAPAKELRDSTTIDVDAKEKTRQQ.

It belongs to the TatA/E family. In terms of assembly, the Tat system comprises two distinct complexes: a TatABC complex, containing multiple copies of TatA, TatB and TatC subunits, and a separate TatA complex, containing only TatA subunits. Substrates initially bind to the TatABC complex, which probably triggers association of the separate TatA complex to form the active translocon.

It is found in the cell inner membrane. Its function is as follows. Part of the twin-arginine translocation (Tat) system that transports large folded proteins containing a characteristic twin-arginine motif in their signal peptide across membranes. TatA could form the protein-conducting channel of the Tat system. The chain is Sec-independent protein translocase protein TatA from Cupriavidus pinatubonensis (strain JMP 134 / LMG 1197) (Cupriavidus necator (strain JMP 134)).